Reading from the N-terminus, the 424-residue chain is Histidine--tRNA ligase (424 aa).

Belongs to the class-II aminoacyl-tRNA synthetase family. In terms of assembly, homodimer.

The protein localises to the cytoplasm. It carries out the reaction tRNA(His) + L-histidine + ATP = L-histidyl-tRNA(His) + AMP + diphosphate + H(+). The chain is Histidine--tRNA ligase from Shigella flexneri.